A 308-amino-acid polypeptide reads, in one-letter code: Carbonic anhydrase 6 (308 aa).

A signal peptide spans 1–17 (MRALVLLLSLFLLGGQA). Positions 21 to 278 (SDWTYSEGAL…LNHRVVESNF (258 aa)) constitute an Alpha-carbonic anhydrase domain. The cysteines at positions 42 and 224 are disulfide-linked. Asn-67 carries an N-linked (GlcNAc...) asparagine glycan. His-85 serves as the catalytic Proton donor/acceptor. Residues His-111, His-113, and His-138 each contribute to the Zn(2+) site. Position 220-221 (220-221 (TT)) interacts with substrate. Residue Asn-256 is glycosylated (N-linked (GlcNAc...) asparagine).

It belongs to the alpha-carbonic anhydrase family. Requires Zn(2+) as cofactor. As to expression, major constituent of saliva.

It is found in the secreted. It catalyses the reaction hydrogencarbonate + H(+) = CO2 + H2O. Its activity is regulated as follows. Inhibited by coumarins, sulfonamide derivatives such as acetazolamide (AZA), saccharin and Foscarnet (phosphonoformate trisodium salt). Its function is as follows. Reversible hydration of carbon dioxide. Its role in saliva is unknown. This Homo sapiens (Human) protein is Carbonic anhydrase 6 (CA6).